A 78-amino-acid polypeptide reads, in one-letter code: Rubredoxin (78 aa).

One can recognise a Rubredoxin-like domain in the interval aspartate 23–leucine 74. Positions 28, 31, 61, and 64 each coordinate Fe cation.

It belongs to the rubredoxin family. Requires Fe(3+) as cofactor.

Rubredoxin is a small nonheme, iron protein lacking acid-labile sulfide. Its single Fe, chelated to 4 Cys, functions as an electron acceptor and may also stabilize the conformation of the molecule. Could be involved in hydrogenase-linked redox processes. The sequence is that of Rubredoxin (hoxR) from Cupriavidus necator (strain ATCC 17699 / DSM 428 / KCTC 22496 / NCIMB 10442 / H16 / Stanier 337) (Ralstonia eutropha).